The sequence spans 329 residues: uncharacterized protein (329 aa).

The disordered stretch occupies residues 284–303 (SGGGHSEAGGLNAPYDKSKS).

This is an uncharacterized protein from Methanocaldococcus jannaschii (strain ATCC 43067 / DSM 2661 / JAL-1 / JCM 10045 / NBRC 100440) (Methanococcus jannaschii).